The chain runs to 97 residues: Citrate lyase acyl carrier protein (97 aa).

An O-(phosphoribosyl dephospho-coenzyme A)serine modification is found at serine 14.

This sequence belongs to the CitD family. In terms of assembly, oligomer with a subunit composition of (alpha,beta,gamma)6.

It is found in the cytoplasm. Covalent carrier of the coenzyme of citrate lyase. This is Citrate lyase acyl carrier protein from Enterobacter sp. (strain 638).